A 113-amino-acid chain; its full sequence is Iron-sulfur cluster insertion protein ErpA (113 aa).

The iron-sulfur cluster site is built by Cys-41, Cys-105, and Cys-107.

This sequence belongs to the HesB/IscA family. Homodimer. The cofactor is iron-sulfur cluster.

In terms of biological role, required for insertion of 4Fe-4S clusters for at least IspG. The protein is Iron-sulfur cluster insertion protein ErpA of Vibrio parahaemolyticus serotype O3:K6 (strain RIMD 2210633).